Here is a 544-residue protein sequence, read N- to C-terminus: Lipid II flippase MurJ (544 aa).

14 helical membrane passes run Ile-21–Leu-41, Tyr-49–Ser-69, Val-90–Ala-110, Val-127–Val-147, Ile-169–Gly-189, Val-191–Val-211, Met-241–Leu-261, Leu-297–Thr-317, Thr-338–Tyr-358, Ile-375–Ile-395, Phe-404–Ile-424, Gly-431–Ile-451, Val-471–Ile-491, and Ala-500–Tyr-520.

Belongs to the polysaccharide synthase family.

The protein resides in the cell membrane. It functions in the pathway cell wall biogenesis; peptidoglycan biosynthesis. Involved in peptidoglycan biosynthesis. Transports lipid-linked peptidoglycan precursors from the inner to the outer leaflet of the cytoplasmic membrane. Not essential for growth. This is Lipid II flippase MurJ from Bacillus subtilis (strain 168).